The following is a 134-amino-acid chain: Thioredoxin-like protein Clot (134 aa).

The Thioredoxin domain occupies 1-134 (MTLKKVDANP…LILPLLAPST (134 aa)). Active-site nucleophile residues include Cys48 and Cys51. A disulfide bridge connects residues Cys48 and Cys51.

This sequence belongs to the thioredoxin family.

In terms of biological role, probable thiol-disulfide oxidoreductase that may participate in various redox reactions. In Arabidopsis thaliana (Mouse-ear cress), this protein is Thioredoxin-like protein Clot.